A 122-amino-acid chain; its full sequence is Large ribosomal subunit protein uL14c (122 aa).

It belongs to the universal ribosomal protein uL14 family. In terms of assembly, part of the 50S ribosomal subunit.

The protein localises to the plastid. It localises to the chloroplast. Its function is as follows. Binds to 23S rRNA. In Lepidium virginicum (Virginia pepperweed), this protein is Large ribosomal subunit protein uL14c.